Reading from the N-terminus, the 357-residue chain is Protein RecA (357 aa).

73–80 (GPESSGKT) contributes to the ATP binding site.

This sequence belongs to the RecA family.

It is found in the cytoplasm. Its function is as follows. Can catalyze the hydrolysis of ATP in the presence of single-stranded DNA, the ATP-dependent uptake of single-stranded DNA by duplex DNA, and the ATP-dependent hybridization of homologous single-stranded DNAs. It interacts with LexA causing its activation and leading to its autocatalytic cleavage. This chain is Protein RecA, found in Methylibium petroleiphilum (strain ATCC BAA-1232 / LMG 22953 / PM1).